The primary structure comprises 505 residues: AMP phosphorylase 2 (505 aa).

AMP contacts are provided by residues Gly-169, 195 to 200 (SRAITT), Thr-204, Ser-265, and Lys-289.

It belongs to the thymidine/pyrimidine-nucleoside phosphorylase family. Type 2 subfamily.

It carries out the reaction AMP + phosphate = alpha-D-ribose 1,5-bisphosphate + adenine. The catalysed reaction is CMP + phosphate = cytosine + alpha-D-ribose 1,5-bisphosphate. It catalyses the reaction UMP + phosphate = alpha-D-ribose 1,5-bisphosphate + uracil. Its function is as follows. Catalyzes the conversion of AMP and phosphate to adenine and ribose 1,5-bisphosphate (R15P). Exhibits phosphorylase activity toward CMP and UMP in addition to AMP. Functions in an archaeal AMP degradation pathway, together with R15P isomerase and RubisCO. The polypeptide is AMP phosphorylase 2 (Archaeoglobus fulgidus (strain ATCC 49558 / DSM 4304 / JCM 9628 / NBRC 100126 / VC-16)).